We begin with the raw amino-acid sequence, 593 residues long: MLPAHKQTLEALLADSVKQVAHALKGADAAFVAPAITLERPKVAAHGDVACNVAMQLAKPLGTNPRQLAEQIVAALTAQPAAQGLVEAAEIAGPGFINLRLSAAAKQAVIAAVFDQGRAFGTSDREKGKQVLLEFVSANPTGPLHVGHGRQAALGDVLANVIASQGYAVHREFYYNDAGVQIGNLAISTQARARGLKPGDAGWPEAAYNGEYIADIARDYLNGETVAASDGEPVKGTGDVEDLDAIRKFAVTYLRREQDMDLQAFGVKFDQYYLESSLYSEGRVEKTVDALVKAGMTYEQDGALWLRTTDEGDDKDRVMRKSDGTYTYFVPDVAYHVTKWERGFTKVINIQGSDHHGTIARVRAGLQGLHIGIPKGYPDYVLHKMVTVMRDGQEVKISKRAGSYVTVRDLIEWSGGAAAGQEAAPDLIDEATITRGRDAVRFFLISRKADTEFVFDIDLALKQNDENPVYYVQYAHARICSVLNELKSRYNVDVAQLPGADLSQLTSAQATSLMQKLAEYPDMLTHAANELAPHAVAFYLRDLAGEFHSFYNAERVLVDDAAPRNARAALLAATRQVLENGLAMLGVSAPAKM.

The 'HIGH' region signature appears at 138–148 (ANPTGPLHVGH).

The protein belongs to the class-I aminoacyl-tRNA synthetase family. Monomer.

The protein localises to the cytoplasm. The enzyme catalyses tRNA(Arg) + L-arginine + ATP = L-arginyl-tRNA(Arg) + AMP + diphosphate. The protein is Arginine--tRNA ligase of Burkholderia cenocepacia (strain ATCC BAA-245 / DSM 16553 / LMG 16656 / NCTC 13227 / J2315 / CF5610) (Burkholderia cepacia (strain J2315)).